A 185-amino-acid chain; its full sequence is Ribosome-recycling factor (185 aa).

It belongs to the RRF family.

Its subcellular location is the cytoplasm. Its function is as follows. Responsible for the release of ribosomes from messenger RNA at the termination of protein biosynthesis. May increase the efficiency of translation by recycling ribosomes from one round of translation to another. This is Ribosome-recycling factor from Streptococcus thermophilus (strain CNRZ 1066).